A 412-amino-acid chain; its full sequence is Histidine--tRNA ligase (412 aa).

It belongs to the class-II aminoacyl-tRNA synthetase family. As to quaternary structure, homodimer.

The protein resides in the cytoplasm. It catalyses the reaction tRNA(His) + L-histidine + ATP = L-histidyl-tRNA(His) + AMP + diphosphate + H(+). The polypeptide is Histidine--tRNA ligase (Rickettsia typhi (strain ATCC VR-144 / Wilmington)).